Consider the following 582-residue polypeptide: TRAF-type zinc finger domain-containing protein 1 (582 aa).

N-acetylalanine is present on Ala-2. The TRAF-type zinc-finger motif lies at 27–103; that stretch reads IHEIHCQRNI…DLELSILKLK (77 aa). Phosphoserine is present on Ser-191. The tract at residues 217–236 is disordered; that stretch reads EQERQERNRGQQPPKEGGEE. Residues Ser-278, Ser-320, Ser-326, Ser-327, Ser-409, Ser-415, Ser-430, and Ser-470 each carry the phosphoserine modification. The interval 401–582 is disordered; it reads TEGIPRLDSQ…AGDAEEEEEE (182 aa). 2 stretches are compositionally biased toward polar residues: residues 454 to 471 and 486 to 495; these read PINN…STSG and LSNSDSQDIQ.

As to quaternary structure, interacts with MAVS, TICAM1, TRAF1, TRAF2, TRAF3. Interacts with TRAF6.

Functionally, negative feedback regulator that controls excessive innate immune responses. Regulates both Toll-like receptor 4 (TLR4) and DDX58/RIG1-like helicases (RLH) pathways. May inhibit the LTR pathway by direct interaction with TRAF6 and attenuation of NF-kappa-B activation. May negatively regulate the RLH pathway downstream from MAVS and upstream of NF-kappa-B and IRF3. This Homo sapiens (Human) protein is TRAF-type zinc finger domain-containing protein 1 (TRAFD1).